Consider the following 3411-residue polypeptide: Genome polyprotein (3411 aa).

Topologically, residues 1–104 (MSGRKAQGKT…LSSRKRRSHD (104 aa)) are cytoplasmic. A hydrophobic; homodimerization of capsid protein C region spans residues 38-72 (PGPSRGVQGFIFFFLFNILTGKKITAHLKRLWKML). A propeptide spans 102-121 (SHDVLTVQFLILGMLLMTGG) (ER anchor for the capsid protein C, removed in mature form by serine protease NS3). A helical membrane pass occupies residues 105-125 (VLTVQFLILGMLLMTGGVTLV). At 126–244 (RKNRWLLLNV…GERQLQKIER (119 aa)) the chain is on the extracellular side. 2 N-linked (GlcNAc...) asparagine; by host glycosylation sites follow: Asn134 and Asn150. The helical transmembrane segment at 245 to 265 (WFVRNPFFAVTALTIAYLVGS) threads the bilayer. The Cytoplasmic segment spans residues 266 to 270 (NMTQR). A helical membrane pass occupies residues 271–285 (VVIALLVLAVGPAYS). Topologically, residues 286-730 (AHCIGITDRD…TVFGSAFQGL (445 aa)) are extracellular. Cystine bridges form between Cys288-Cys315, Cys345-Cys401, Cys345-Cys406, Cys359-Cys390, Cys377-Cys401, Cys377-Cys406, Cys467-Cys568, and Cys585-Cys615. The fusion peptide stretch occupies residues 383 to 396 (DRGWGNGCGLFGKG). The chain crosses the membrane as a helical span at residues 731-751 (FGGLNWITKVIMGAVLIWVGI). Topologically, residues 752–757 (NTRNMT) are extracellular. A helical membrane pass occupies residues 758–778 (MSMSMILVGVIMMFLSLGVGA). The Extracellular segment spans residues 779–1132 (DQGCAINFGK…LVRSWVTAGE (354 aa)). 6 disulfides stabilise this stretch: Cys782/Cys793, Cys833/Cys921, Cys957/Cys1002, Cys1058/Cys1107, Cys1069/Cys1091, and Cys1090/Cys1094. Asn908 and Asn986 each carry an N-linked (GlcNAc...) asparagine; by host glycan. Residues 1133–1153 (IHAVPFGLVSMMIAMEVVLRK) form a helical membrane-spanning segment. Over 1154–1201 (RQGPKQMLVGGVVLLGAMLVGQVTLLDLLKLTVAVGLHFHEMNNGGDA) the chain is Cytoplasmic. A helical membrane pass occupies residues 1202–1222 (MYMALIAAFSIRPGLLIGFGL). At 1223-1287 (RTLWSPRERL…ILPLMALLTP (65 aa)) the chain is on the lumenal side. A helical transmembrane segment spans residues 1288–1308 (VTMAEVRLAAMFFCAVVIIGV). Residues 1309 to 1355 (LHQNFKDTSMQKTIPLVALTLTSYLGLTQPFLGLCAFLATRIFGRRS) lie on the Cytoplasmic side of the membrane. A helical membrane pass occupies residues 1356–1376 (IPVNEALAAAGLVGVLAGLAF). Residues 1377-1378 (QE) are Lumenal-facing. Residues 1379-1399 (MENFLGPIAVGGLLMMLVSVA) traverse the membrane as a helical segment. Residues 1400-1456 (GRVDGLELKKLGEVSWEEEAEISGSSARYDVALSEQGEFKLLSEEKVPWDQVVMTSL) lie on the Cytoplasmic side of the membrane. Residues 1407-1446 (LKKLGEVSWEEEAEISGSSARYDVALSEQGEFKLLSEEKV) are interacts with and activates NS3 protease. The helical intramembrane region spans 1457–1477 (ALVGAALHPFALLLVLAGWLF). Over 1478–2157 (HVRGARRSGD…RNALSMMPEA (680 aa)) the chain is Cytoplasmic. The Peptidase S7 domain occupies 1485 to 1665 (SGDVLWDIPT…EVKEEGKEEL (181 aa)). Active-site charge relay system; for serine protease NS3 activity residues include His1537, Asp1561, and Ser1622. Residues 1669 to 1825 (PTMLKKGMTT…HSNGEIEDVQ (157 aa)) enclose the Helicase ATP-binding domain. Positions 1673-1676 (KKGM) are important for RNA-binding. ATP is bound at residue 1682 to 1689 (FHPGAGKT). The DEAH box signature appears at 1773-1776 (DEAH). Residues 1820–1997 (EIEDVQTDIP…VRGGMVAPLY (178 aa)) form the Helicase C-terminal domain. The residue at position 1877 (Lys1877) is an N6-acetyllysine; by host. The chain crosses the membrane as a helical span at residues 2158 to 2178 (MTIVMLFILAGLLTSGMVIFF). Topologically, residues 2179–2186 (MSPKGISR) are lumenal. Residues 2187-2207 (MSMAMGTMAGCGYLMFLGGVK) constitute an intramembrane region (helical). Topologically, residues 2208 to 2209 (PT) are lumenal. The helical transmembrane segment at 2210–2230 (HISYVMLIFFVLMVVVIPEPG) threads the bilayer. The Cytoplasmic portion of the chain corresponds to 2231 to 2241 (QQRSIQDNQVA). Residues 2242-2262 (YLIIGILTLVSAVAANELGML) form a helical membrane-spanning segment. Residues 2263–2293 (EKTKEDLFGKKNLIPSSASPWSWPDLDLKPG) lie on the Lumenal side of the membrane. An intramembrane region (helical) is located at residues 2294 to 2314 (AAWTVYVGIVTMLSPMLHHWI). At 2315-2360 (KVEYGNLSLSGIAQSASVLSFMDKGIPFMKMNISVIMLLVSGWNSI) the chain is on the lumenal side. A helical transmembrane segment spans residues 2361 to 2381 (TVMPLLCGIGCAMLHWSLILP). The Cytoplasmic portion of the chain corresponds to 2382-2421 (GIKAQQSKLAQRRVFHGVAENPVVDGNPTVDIEEAPEMPA). The chain crosses the membrane as a helical span at residues 2422–2442 (LYEKKLALYLLLALSLASVAM). The Lumenal portion of the chain corresponds to 2443–2445 (CRT). A helical membrane pass occupies residues 2446–2466 (PFSLAEGIVLASAALGPLIEG). Topologically, residues 2467–3411 (NTSLLWNGPM…DADLQLGELI (945 aa)) are cytoplasmic. The mRNA cap 0-1 NS5-type MT domain occupies 2507–2771 (GSANGKTLGE…DVILPIGTRS (265 aa)). Residue Ser2562 coordinates S-adenosyl-L-methionine. Ser2562 is modified (phosphoserine). The active-site For 2'-O-MTase activity is Lys2567. S-adenosyl-L-methionine is bound by residues Gly2592, Trp2593, Thr2610, Leu2611, Asp2637, and Ile2638. Catalysis depends on Asp2652, which acts as the For 2'-O-MTase activity. Ile2653 lines the S-adenosyl-L-methionine pocket. Catalysis depends on for 2'-O-MTase activity residues Lys2688 and Glu2724. Tyr2726 serves as a coordination point for S-adenosyl-L-methionine. Residues 2878 to 2911 (RKIMKVVNRWLFRHLAREKNPRLCTKEEFIAKVR) carry the Nuclear localization signal motif. 4 residues coordinate Zn(2+): Glu2945, His2949, Cys2954, and Cys2957. In terms of domain architecture, RdRp catalytic spans 3035–3187 (GGFYADDTAG…RPIDDRFGLA (153 aa)). Positions 3222, 3238, and 3357 each coordinate Zn(2+).

It in the N-terminal section; belongs to the class I-like SAM-binding methyltransferase superfamily. mRNA cap 0-1 NS5-type methyltransferase family. As to quaternary structure, homodimer. Interacts (via N-terminus) with host EXOC1 (via C-terminus); this interaction results in EXOC1 degradation through the proteasome degradation pathway. In terms of assembly, forms heterodimers with envelope protein E in the endoplasmic reticulum and Golgi. Homodimer; in the endoplasmic reticulum and Golgi. Interacts with protein prM. Interacts with non-structural protein 1. As to quaternary structure, homodimer; Homohexamer when secreted. Interacts with envelope protein E. In terms of assembly, interacts (via N-terminus) with serine protease NS3. Forms a heterodimer with serine protease NS3. May form homooligomers. As to quaternary structure, forms a heterodimer with NS2B. Interacts with non-structural protein 2A (via N-terminus). Interacts with NS4B. Interacts with unphosphorylated RNA-directed RNA polymerase NS5; this interaction stimulates RNA-directed RNA polymerase NS5 guanylyltransferase activity. NS3 interacts with host PDCD6IP; this interaction contributes to virion release. In terms of assembly, interacts with serine protease NS3. Homodimer. Interacts with host STAT2; this interaction prevents the establishment of cellular antiviral state. Interacts with serine protease NS3. Interacts with host TRIM23; this interaction leads to NS5 ubiquitination. In terms of processing, specific enzymatic cleavages in vivo yield mature proteins. The nascent capsid protein C contains a C-terminal hydrophobic domain that act as a signal sequence for translocation of prM into the lumen of the ER. Mature capsid protein C is cleaved at a site upstream of this hydrophobic domain by NS3. prM is cleaved in post-Golgi vesicles by a host furin, releasing the mature small envelope protein M, and peptide pr. Non-structural protein 2A-alpha, a C-terminally truncated form of non-structural protein 2A, results from partial cleavage by NS3. Specific enzymatic cleavages in vivo yield mature proteins peptide 2K acts as a signal sequence and is removed from the N-terminus of NS4B by the host signal peptidase in the ER lumen. Signal cleavage at the 2K-4B site requires a prior NS3 protease-mediated cleavage at the 4A-2K site. Post-translationally, cleaved in post-Golgi vesicles by a host furin, releasing the mature small envelope protein M, and peptide pr. This cleavage is incomplete as up to 30% of viral particles still carry uncleaved prM. N-glycosylated. In terms of processing, N-glycosylated. The excreted form is glycosylated and this is required for efficient secretion of the protein from infected cells. Post-translationally, polyubiquitinated; ubiquitination is probably mediated by host TRIM23 and is prerequisite for NS5-STAT2 interaction. NS5 is not ISGylated or sumoylated. Acetylated by host KAT5. Acetylation modulates NS3 RNA-binding and unwinding activities and plays an important positive role for viral replication. In terms of processing, phosphorylated on serines residues. This phosphorylation may trigger NS5 nuclear localization.

It is found in the virion. Its subcellular location is the host nucleus. It localises to the host cytoplasm. The protein resides in the host perinuclear region. The protein localises to the secreted. It is found in the virion membrane. Its subcellular location is the host endoplasmic reticulum membrane. It catalyses the reaction Selective hydrolysis of -Xaa-Xaa-|-Yaa- bonds in which each of the Xaa can be either Arg or Lys and Yaa can be either Ser or Ala.. The catalysed reaction is RNA(n) + a ribonucleoside 5'-triphosphate = RNA(n+1) + diphosphate. It carries out the reaction a ribonucleoside 5'-triphosphate + H2O = a ribonucleoside 5'-diphosphate + phosphate + H(+). The enzyme catalyses ATP + H2O = ADP + phosphate + H(+). It catalyses the reaction a 5'-end (5'-triphosphoguanosine)-ribonucleoside in mRNA + S-adenosyl-L-methionine = a 5'-end (N(7)-methyl 5'-triphosphoguanosine)-ribonucleoside in mRNA + S-adenosyl-L-homocysteine. The catalysed reaction is a 5'-end (N(7)-methyl 5'-triphosphoguanosine)-ribonucleoside in mRNA + S-adenosyl-L-methionine = a 5'-end (N(7)-methyl 5'-triphosphoguanosine)-(2'-O-methyl-ribonucleoside) in mRNA + S-adenosyl-L-homocysteine + H(+). Plays a role in virus budding by binding to the cell membrane and gathering the viral RNA into a nucleocapsid that forms the core of a mature virus particle. During virus entry, may induce genome penetration into the host cytoplasm after hemifusion induced by the surface proteins. Can migrate to the cell nucleus where it modulates host functions. Functionally, inhibits RNA silencing by interfering with host Dicer. In terms of biological role, prevents premature fusion activity of envelope proteins in trans-Golgi by binding to envelope protein E at pH6.0. After virion release in extracellular space, gets dissociated from E dimers. Its function is as follows. Acts as a chaperone for envelope protein E during intracellular virion assembly by masking and inactivating envelope protein E fusion peptide. prM is the only viral peptide matured by host furin in the trans-Golgi network probably to avoid catastrophic activation of the viral fusion activity in acidic Golgi compartment prior to virion release. prM-E cleavage is inefficient, and many virions are only partially matured. These uncleaved prM would play a role in immune evasion. May play a role in virus budding. Exerts cytotoxic effects by activating a mitochondrial apoptotic pathway through M ectodomain. May display a viroporin activity. Functionally, binds to host cell surface receptor and mediates fusion between viral and cellular membranes. Envelope protein is synthesized in the endoplasmic reticulum in the form of heterodimer with protein prM. They play a role in virion budding in the ER, and the newly formed immature particle is covered with 60 spikes composed of heterodimer between precursor prM and envelope protein E. The virion is transported to the Golgi apparatus where the low pH causes dissociation of PrM-E heterodimers and formation of E homodimers. prM-E cleavage is inefficient, and many virions are only partially matured. These uncleaved prM would play a role in immune evasion. In terms of biological role, involved in immune evasion, pathogenesis and viral replication. Once cleaved off the polyprotein, is targeted to three destinations: the viral replication cycle, the plasma membrane and the extracellular compartment. Essential for viral replication. Required for formation of the replication complex and recruitment of other non-structural proteins to the ER-derived membrane structures. Excreted as a hexameric lipoparticle that plays a role against host immune response. Antagonizing the complement function. Binds to the host macrophages and dendritic cells. Inhibits signal transduction originating from Toll-like receptor 3 (TLR3). Its function is as follows. Component of the viral RNA replication complex that functions in virion assembly and antagonizes the host immune response. Required cofactor for the serine protease function of NS3. May have membrane-destabilizing activity and form viroporins. Functionally, displays three enzymatic activities: serine protease, NTPase and RNA helicase. NS3 serine protease, in association with NS2B, performs its autocleavage and cleaves the polyprotein at dibasic sites in the cytoplasm: C-prM, NS2A-NS2B, NS2B-NS3, NS3-NS4A, NS4A-2K and NS4B-NS5. NS3 RNA helicase binds RNA and unwinds dsRNA in the 3' to 5' direction. Also plays a role in virus assembly. In terms of biological role, regulates the ATPase activity of the NS3 helicase activity. NS4A allows NS3 helicase to conserve energy during unwinding. Its function is as follows. Functions as a signal peptide for NS4B and is required for the interferon antagonism activity of the latter. Induces the formation of ER-derived membrane vesicles where the viral replication takes place. Inhibits interferon (IFN)-induced host STAT1 phosphorylation and nuclear translocation, thereby preventing the establishment of cellular antiviral state by blocking the IFN-alpha/beta pathway. Functionally, replicates the viral (+) and (-) RNA genome, and performs the capping of genomes in the cytoplasm. NS5 methylates viral RNA cap at guanine N-7 and ribose 2'-O positions. Besides its role in RNA genome replication, also prevents the establishment of cellular antiviral state by blocking the interferon-alpha/beta (IFN-alpha/beta) signaling pathway. IFN-I induces binding of NS5 to host IFN-activated transcription factor STAT2, preventing its transcriptional activity. Host TRIM23 is the E3 ligase that interacts with and polyubiquitinates NS5 to promote its binding to STAT2 and trigger IFN-I signaling inhibition. The chain is Genome polyprotein from Aedes aegypti (Yellowfever mosquito).